A 71-amino-acid chain; its full sequence is Small ribosomal subunit protein bS21 (71 aa).

The tract at residues 40–71 (KPTQVRKRKQAAAVKRHMKRLNREQQRRQRPY) is disordered. Residues 43–59 (QVRKRKQAAAVKRHMKR) are compositionally biased toward basic residues. A compositionally biased stretch (basic and acidic residues) spans 60 to 71 (LNREQQRRQRPY).

Belongs to the bacterial ribosomal protein bS21 family.

In Halorhodospira halophila (strain DSM 244 / SL1) (Ectothiorhodospira halophila (strain DSM 244 / SL1)), this protein is Small ribosomal subunit protein bS21.